A 745-amino-acid chain; its full sequence is Cytoskeleton-associated protein 2-like (745 aa).

Disordered regions lie at residues lysine 26–valine 305, proline 319–glutamine 362, phenylalanine 422–arginine 483, and glutamate 608–serine 638. 2 stretches are compositionally biased toward polar residues: residues serine 67 to lysine 89 and glycine 101 to proline 136. The KEN box motif lies at lysine 183–asparagine 185. Residues lysine 192 to serine 202 show a composition bias toward basic and acidic residues. Lysine 195 participates in a covalent cross-link: Glycyl lysine isopeptide (Lys-Gly) (interchain with G-Cter in SUMO1); alternate. Lysine 195 participates in a covalent cross-link: Glycyl lysine isopeptide (Lys-Gly) (interchain with G-Cter in SUMO2); alternate. Polar residues-rich tracts occupy residues lysine 205–lysine 216, leucine 224–alanine 233, phenylalanine 242–valine 253, and asparagine 284–threonine 301. Residues histidine 427–alanine 442 are compositionally biased toward polar residues. Residues lysine 459 to lysine 475 show a composition bias toward basic and acidic residues. Polar residues predominate over residues glutamate 608–alanine 624. Serine 745 carries the phosphoserine modification.

Belongs to the CKAP2 family. Post-translationally, ubiquitinated by the anaphase promoting complex/cyclosome (APC/C). Highly expressed in regions of active neurogenesis and neural stem/progenitor cells (NSPCs), both embryonic and adult, not detected in lung, liver, kidney, heart, and skeletal muscle.

The protein localises to the cytoplasm. Its subcellular location is the cytoskeleton. It is found in the spindle pole. In terms of biological role, microtubule-associated protein required for mitotic spindle formation and cell-cycle progression in neural progenitor cells. This chain is Cytoskeleton-associated protein 2-like (Ckap2l), found in Mus musculus (Mouse).